The following is a 1201-amino-acid chain: MKMNRHFTVPQNGESSTIQWTKRNSKITNPDGSKVFEANDILVPEDWSQVAVDILAQKYFRRKGVPKYLKKVQEDGIPEWLQKSIPDTEKLESLKPEDRFGGETSALEVFHRLAGCWTYWGYKYKYFSDEESAKIFYDEIVYMLATQMAAPNSPQWFNTGLNWAYGIDGKSQGHYYVDPSTGKLVKSTSAYEHPQPHACFIQSVDDDLVNEGGIMDLWVREARLFKYGSGTGTNFSNLRGENEPLSGGGKSSGLMSFLKIGDRAAGAIKSGGTTRRAAKMVCLDVDHPDIENFIDWKVTEEKKVASLVTGSMLNNRHLNAIMSACYEMEGEDRFNPKKNSSLKKTIQDAKKVLIPDNYIKRVIDLARQGYKEILFEELTTDWQSDAYNTVSGQNSNNSIRLTNEFMAAVEQDQPWNLYFRTEKEKAKVEGRKAKPSQTLRARELWEKISYAAWASADPGTQYHTTINEWHTCPEDGPINASNPCSEYMFLDNTACNLASANLQKFVNLETLNFDVEGFRYLCKLWTIILEISVTMAQFPSKEIAELSYKFRTLGLGYANLGSVLMVLGIPYDSQQAMAITGAISSIMHMTAYATSAEMAKEQGPFVGYAKNQKHMLRVIRNHRRAAYNAPSGDYEGLTITPIGINPAFCPSYMLKAAQEDADLALSLGEKYGFRNAQVTVIAPTGTIGLVMDCDTTGIEPDFALVKFKKLAGGGYFKIINQSVPYGLKKLGYSPSEIEAIVNYCKGHATLNGAPVINTQALKEKGFTNEILEKVEASLPLAFDINFAFNKFNLGENFLTKNLGISKEIFDSPGFSLLEHLGFTKEDINKANDYVCGTMTIENAPFLKEKDYPVFDCANKCGKYGKRFLSYESHIRIMAAAQPFISGAISKTINLPEEAVIEDIKNAYFLSWKMMIKANALYRDGSKLSQPLNSVLELLNGIEIDDQEEIREATISKDPVQIAEKIVTKYISHRRKLPSRRAGYTQKAIVGGHKVYLRTGEYEDGQIGEIFIDMHKEGAAFRSLMNAFAISVSLGLQHGVPLEEYVDAFTFFKFEPNGIVSGNKHIKMSTSVIDYIFRELAITYLGRYDLGQVAPEDLRGDEIGSKRATAESNGQEKETLSSMTAVIEPTPKKEVETISYSQMISKEKPSSSPSGISLLEEVKLAKIKGYTGDSCSECGSFEMVRNGSCLKCMSCGSTTGCS.

Substrate-binding positions include serine 153, 198-199, glycine 230, 482-486, and 683-687; these read AC, NPCSE, and PTGTI. Residues cysteine 199 and cysteine 495 are joined by a disulfide bond. Asparagine 482 serves as the catalytic Proton acceptor. The Cysteine radical intermediate role is filled by cysteine 484. The Proton acceptor role is filled by glutamate 486. A compositionally biased stretch (basic and acidic residues) spans 1100–1118; that stretch reads DEIGSKRATAESNGQEKET. A disordered region spans residues 1100-1120; that stretch reads DEIGSKRATAESNGQEKETLS.

It belongs to the ribonucleoside diphosphate reductase class-2 family. It depends on adenosylcob(III)alamin as a cofactor.

The catalysed reaction is a 2'-deoxyribonucleoside 5'-diphosphate + [thioredoxin]-disulfide + H2O = a ribonucleoside 5'-diphosphate + [thioredoxin]-dithiol. Catalyzes the reduction of ribonucleotides to deoxyribonucleotides. May function to provide a pool of deoxyribonucleotide precursors for DNA repair during oxygen limitation and/or for immediate growth after restoration of oxygen. The protein is Vitamin B12-dependent ribonucleotide reductase (nrdJ) of Leptospira interrogans serogroup Icterohaemorrhagiae serovar copenhageni (strain Fiocruz L1-130).